The following is a 367-amino-acid chain: tRNA 2-selenouridine synthase (367 aa).

The region spanning 15 to 138 (FLQARPLIDV…LRTFLIQILE (124 aa)) is the Rhodanese domain. The S-selanylcysteine intermediate role is filled by C98.

The protein belongs to the SelU family. As to quaternary structure, monomer.

It carries out the reaction 5-methylaminomethyl-2-thiouridine(34) in tRNA + selenophosphate + (2E)-geranyl diphosphate + H2O + H(+) = 5-methylaminomethyl-2-selenouridine(34) in tRNA + (2E)-thiogeraniol + phosphate + diphosphate. It catalyses the reaction 5-methylaminomethyl-2-thiouridine(34) in tRNA + (2E)-geranyl diphosphate = 5-methylaminomethyl-S-(2E)-geranyl-thiouridine(34) in tRNA + diphosphate. The enzyme catalyses 5-methylaminomethyl-S-(2E)-geranyl-thiouridine(34) in tRNA + selenophosphate + H(+) = 5-methylaminomethyl-2-(Se-phospho)selenouridine(34) in tRNA + (2E)-thiogeraniol. The catalysed reaction is 5-methylaminomethyl-2-(Se-phospho)selenouridine(34) in tRNA + H2O = 5-methylaminomethyl-2-selenouridine(34) in tRNA + phosphate. In terms of biological role, involved in the post-transcriptional modification of the uridine at the wobble position (U34) of tRNA(Lys), tRNA(Glu) and tRNA(Gln). Catalyzes the conversion of 2-thiouridine (S2U-RNA) to 2-selenouridine (Se2U-RNA). Acts in a two-step process involving geranylation of 2-thiouridine (S2U) to S-geranyl-2-thiouridine (geS2U) and subsequent selenation of the latter derivative to 2-selenouridine (Se2U) in the tRNA chain. This is tRNA 2-selenouridine synthase from Shewanella denitrificans (strain OS217 / ATCC BAA-1090 / DSM 15013).